We begin with the raw amino-acid sequence, 156 residues long: Putative pre-16S rRNA nuclease (156 aa).

It belongs to the YqgF nuclease family.

It localises to the cytoplasm. In terms of biological role, could be a nuclease involved in processing of the 5'-end of pre-16S rRNA. This chain is Putative pre-16S rRNA nuclease, found in Rickettsia typhi (strain ATCC VR-144 / Wilmington).